A 119-amino-acid polypeptide reads, in one-letter code: Large ribosomal subunit protein uL22 (119 aa).

It belongs to the universal ribosomal protein uL22 family. As to quaternary structure, part of the 50S ribosomal subunit.

Functionally, this protein binds specifically to 23S rRNA; its binding is stimulated by other ribosomal proteins, e.g. L4, L17, and L20. It is important during the early stages of 50S assembly. It makes multiple contacts with different domains of the 23S rRNA in the assembled 50S subunit and ribosome. Its function is as follows. The globular domain of the protein is located near the polypeptide exit tunnel on the outside of the subunit, while an extended beta-hairpin is found that lines the wall of the exit tunnel in the center of the 70S ribosome. The sequence is that of Large ribosomal subunit protein uL22 from Chlorobium phaeobacteroides (strain DSM 266 / SMG 266 / 2430).